We begin with the raw amino-acid sequence, 369 residues long: Prenyltransferase malB (369 aa).

E87 serves as a coordination point for substrate. R100 and Y189 together coordinate dimethylallyl diphosphate. Y191 contacts substrate.

It belongs to the tryptophan dimethylallyltransferase family.

Prenyltransferase; part of the gene cluster that mediates the biosynthesis of malbrancheamide, a dichlorinated fungal indole alkaloid that belongs to a family of natural products containing a characteristic bicyclo[2.2.2]diazaoctane core. The first step of malbrancheamide biosynthesis involves coupling of L-proline and L-tryptophan by malG, a bimodular NRPS, to produce L-Pro-L-Trp aldehyde through reductive offloading. This compound undergoes spontaneous cyclization and dehydration to give a dienamine which is reverse prenylated at C-2 by malE. The other prenyltransferase present in the cluster, malB, displays modest activity, suggesting that may be a redundant gene in the pathway. Subsequently, a [4+2] Diels-Alder cyclo-addition catalyzed by the bifunctional enzyme malC forms the characteristic bicyclo[2.2.2]diazaoctane ring of premalbrancheamid. Finally, the flavin-dependent halogenase malA catalyzes the iterative dichlorination of the indole ring of premalbrancheamide to yield C-9 monochlorinated malbrancheamide B, C-8 monochlorinated isomalbrancheamide B, and dichlorinated malbrancheamide. MalA is also able to brominate premalbrancheamide at C-9 to yield malbrancheamide C, and, to a lesser extend, at C-8 to yield isomalbrancheamide C. Finally, malA can brominate C-9 monochlorinated malbrancheamide B at C-8 to yield malbrancheamide D, or C-8 monochlorinated isomalbrancheamide B at C-9 to produce isomalbrancheamide D. In Malbranchea aurantiaca, this protein is Prenyltransferase malB.